Here is a 251-residue protein sequence, read N- to C-terminus: Ribonuclease PH (251 aa).

Phosphate contacts are provided by residues Arg87 and 125–127 (GTR).

This sequence belongs to the RNase PH family. In terms of assembly, homohexameric ring arranged as a trimer of dimers.

It carries out the reaction tRNA(n+1) + phosphate = tRNA(n) + a ribonucleoside 5'-diphosphate. Phosphorolytic 3'-5' exoribonuclease that plays an important role in tRNA 3'-end maturation. Removes nucleotide residues following the 3'-CCA terminus of tRNAs; can also add nucleotides to the ends of RNA molecules by using nucleoside diphosphates as substrates, but this may not be physiologically important. Probably plays a role in initiation of 16S rRNA degradation (leading to ribosome degradation) during starvation. The protein is Ribonuclease PH of Saccharopolyspora erythraea (strain ATCC 11635 / DSM 40517 / JCM 4748 / NBRC 13426 / NCIMB 8594 / NRRL 2338).